We begin with the raw amino-acid sequence, 569 residues long: Urease subunit alpha (569 aa).

In terms of domain architecture, Urease spans 131 to 569 (GAIDSHIHFI…LPLAQRYLLL (439 aa)). 3 residues coordinate Ni(2+): H136, H138, and K219. K219 carries the post-translational modification N6-carboxylysine. Residue H221 participates in substrate binding. Residues H248 and H274 each contribute to the Ni(2+) site. H322 serves as the catalytic Proton donor. Residue D362 participates in Ni(2+) binding.

Belongs to the metallo-dependent hydrolases superfamily. Urease alpha subunit family. In terms of assembly, heterotrimer of UreA (gamma), UreB (beta) and UreC (alpha) subunits. Three heterotrimers associate to form the active enzyme. The cofactor is Ni cation. Post-translationally, carboxylation allows a single lysine to coordinate two nickel ions.

It localises to the cytoplasm. It catalyses the reaction urea + 2 H2O + H(+) = hydrogencarbonate + 2 NH4(+). The protein operates within nitrogen metabolism; urea degradation; CO(2) and NH(3) from urea (urease route): step 1/1. This Prochlorococcus marinus (strain NATL2A) protein is Urease subunit alpha.